The primary structure comprises 145 residues: uncharacterized protein (145 aa).

A dksA C4-type zinc finger spans residues 86-110; it reads CERCGEEIPEPRLCAIPWTRYCAKC.

This is an uncharacterized protein from Aquifex aeolicus (strain VF5).